Consider the following 859-residue polypeptide: Active breakpoint cluster region-related protein (859 aa).

The interval 26–84 is disordered; sequence TDEYDGEGNEEQKGPPEGSETMPYIDESPTMSPQLSARSQGGGDGVSPTPPEGLAPGVE. The segment covering 54–64 has biased composition (polar residues); it reads PTMSPQLSARS. Phosphoserine is present on Ser57. Positions 91–284 constitute a DH domain; it reads MRKLVLSGFL…QNFLSSINED (194 aa). The 159-residue stretch at 301-459 folds into the PH domain; sequence QLVKDGFLVE…WREAIQKLQK (159 aa). The 130-residue stretch at 484-613 folds into the C2 domain; that stretch reads TVHNIPVTSN…ETKNWHTDVI (130 aa). The region spanning 647-845 is the Rho-GAP domain; it reads VKISVVTKRE…YYLQHPPISF (199 aa).

In terms of assembly, interacts with DLG4. Highly enriched in the brain. Much weaker expression in heart, lung and muscle.

Its subcellular location is the cell projection. It localises to the dendritic spine. The protein resides in the axon. It is found in the synapse. Functionally, protein with a unique structure having two opposing regulatory activities toward small GTP-binding proteins. The C-terminus is a GTPase-activating protein domain which stimulates GTP hydrolysis by RAC1, RAC2 and CDC42. Accelerates the intrinsic rate of GTP hydrolysis of RAC1 or CDC42, leading to down-regulation of the active GTP-bound form. The central Dbl homology (DH) domain functions as a guanine nucleotide exchange factor (GEF) that modulates the GTPases CDC42, RHOA and RAC1. Promotes the conversion of CDC42, RHOA and RAC1 from the GDP-bound to the GTP-bound form. Functions as an important negative regulator of neuronal RAC1 activity. Regulates macrophage functions such as CSF-1 directed motility and phagocytosis through the modulation of RAC1 activity. The protein is Active breakpoint cluster region-related protein of Homo sapiens (Human).